We begin with the raw amino-acid sequence, 2192 residues long: Non-reducing polyketide synthase 1 (2192 aa).

The segment at 5-243 is N-terminal acylcarrier protein transacylase domain (SAT); it reads LLLGDQTADQ…VSIPIYAPYH (239 aa). Positions 374-806 constitute a Ketosynthase family 3 (KS3) domain; it reads NDKIAIVGMS…GGNTSLLLED (433 aa). Catalysis depends on for beta-ketoacyl synthase activity residues cysteine 546, histidine 681, and histidine 724. Positions 905–1218 are malonyl-CoA:ACP transacylase (MAT) domain; that stretch reads FCFTGQGSQY…ANSMCALFLA (314 aa). Serine 993 (for acyl/malonyl transferase activity) is an active-site residue. Residues 1293–1610 are product template (PT) domain; it reads SCQKIIDEEF…RKVLNTFLPP (318 aa). An N-terminal hotdog fold region spans residues 1295–1430; it reads QKIIDEEFSA…CTVKFEDINT (136 aa). Positions 1295–1605 constitute a PKS/mFAS DH domain; it reads QKIIDEEFSA…FQKIPRKVLN (311 aa). Catalysis depends on histidine 1327, which acts as the Proton acceptor; for dehydratase activity. A C-terminal hotdog fold region spans residues 1458–1605; the sequence is AHVIGRGLAY…FQKIPRKVLN (148 aa). The Proton donor; for dehydratase activity role is filled by aspartate 1518. Residues 1639–1668 form a disordered region; that stretch reads TQAQPAKAVPKQVTVAAPTPKAAPKKADLK. One can recognise a Carrier 1 domain in the interval 1670–1747; that stretch reads PAGPTIITRV…EMKKFFSQYD (78 aa). The residue at position 1707 (serine 1707) is an O-(pantetheine 4'-phosphoryl)serine. Residues 1748-1788 form a disordered region; sequence GEVGTPEQDDSDSDSETSGDASTPMSEVGTPMTIPSSAVSE. Over residues 1754 to 1764 the composition is skewed to acidic residues; it reads EQDDSDSDSET. The 78-residue stretch at 1798 to 1875 folds into the Carrier 2 domain; that stretch reads APASGEVSIA…DVENALDMRP (78 aa). Serine 1835 bears the O-(pantetheine 4'-phosphoryl)serine mark. The segment at 1913-2164 is thioesterase (TE) domain; it reads SKYPAATSVL…SMMKPPHVSI (252 aa).

Functionally, non-reducing polyketide synthase; part of the gene cluster that mediates the biosynthesis of elsinochromes, pigments consisting of at least four interconvertible tautomers (A, B, C and D) that have a core phenolic quinone to which various side chains are attached and which play an important role in fungal pathogenesis. The non-reducing polyketide synthase PKS1 was proposed to iteratively catalyze decarboxylation between acetyl-CoA and malonyl-CoA subunits for polyketide chain elongation. The released polyketide undergoes cyclization to form an aromatic ring, and proceeds via serial modification steps to produce the heptaketide back- bone of elsinochrome. As elsinochrome has a symmetrical structure, two identical heptaketides are fused to form a core 1,2-dihydrobenzo-perylene ring structure, which can then be successively modified to produce the various derivatives of elsinochrome. Some of these reactions may be cooperatively carried out, at least in part, by the products of RDT1, OXR1 and PKS1. PRF1, embedded within the elsinochrome cluster possibly functions to stabilize some of the biosynthetic enzymes required for elsinochrome production. As prefoldin is a hexamer containing 2 a and 4 b subunits, additional prefoldin subunits, whose coding genes may not immediately link to the elsinochrome biosynthetic gene cluster, are required to fulfill the chaperone function. In addition, no methyltransferase-coding gene exists within the biosynthetic gene cluster, even though elsinochrome has four methyl groups at positions C3, C7, C8 and C12. Apparently, the identified gene cluster does not contain the entire entourage of genes responsible for elsinochrome biosynthesis. Once elsinochrome is synthesized, it must be exported outside the fungal cells, which is probably accomplished by the ECT1 transporter, to avoid toxicity. In Elsinoe fawcettii (Citrus scab fungus), this protein is Non-reducing polyketide synthase 1.